A 386-amino-acid polypeptide reads, in one-letter code: uncharacterized protein (386 aa).

Transmembrane regions (helical) follow at residues 48-68 (NLIT…MLVY), 78-98 (PSWV…FDAI), 136-156 (LQLD…YFYI), 171-191 (YFSG…LTAI), 213-233 (FLPY…ALLL), 253-273 (VIKA…VFSL), 285-305 (FLTI…VVIV), 316-336 (WNVL…FGVL), and 344-364 (FFCY…HVIA).

It belongs to the CDP-alcohol phosphatidyltransferase class-I family.

It localises to the membrane. This is an uncharacterized protein from Schizosaccharomyces pombe (strain 972 / ATCC 24843) (Fission yeast).